The sequence spans 602 residues: Threonine--tRNA ligase (602 aa).

Residues 208 to 499 form a catalytic region; sequence DHRKLGTELK…LTEHCAGEFP (292 aa). Positions 300, 351, and 476 each coordinate Zn(2+).

The protein belongs to the class-II aminoacyl-tRNA synthetase family. As to quaternary structure, homodimer. It depends on Zn(2+) as a cofactor.

It is found in the cytoplasm. It carries out the reaction tRNA(Thr) + L-threonine + ATP = L-threonyl-tRNA(Thr) + AMP + diphosphate + H(+). In terms of biological role, catalyzes the attachment of threonine to tRNA(Thr) in a two-step reaction: L-threonine is first activated by ATP to form Thr-AMP and then transferred to the acceptor end of tRNA(Thr). Also edits incorrectly charged L-seryl-tRNA(Thr). The protein is Threonine--tRNA ligase of Campylobacter jejuni subsp. jejuni serotype O:2 (strain ATCC 700819 / NCTC 11168).